The primary structure comprises 33 residues: Brevinin-2DYb (33 aa).

A disulfide bridge connects residues Cys-27 and Cys-33.

As to expression, expressed by the skin glands.

Its subcellular location is the secreted. Its function is as follows. Antimicrobial peptide. Active against the Gram-positive bacterium S.aureus (MIC=30 uM) and the Gram-negative bacterium E.coli (MIC=30 uM). The sequence is that of Brevinin-2DYb from Rana dybowskii (Dybovsky's frog).